Consider the following 416-residue polypeptide: Serine hydroxymethyltransferase (416 aa).

Residues L121 and 125 to 127 (GHL) each bind (6S)-5,6,7,8-tetrahydrofolate. K229 carries the N6-(pyridoxal phosphate)lysine modification.

The protein belongs to the SHMT family. As to quaternary structure, homodimer. Pyridoxal 5'-phosphate serves as cofactor.

The protein localises to the cytoplasm. The enzyme catalyses (6R)-5,10-methylene-5,6,7,8-tetrahydrofolate + glycine + H2O = (6S)-5,6,7,8-tetrahydrofolate + L-serine. Its pathway is one-carbon metabolism; tetrahydrofolate interconversion. The protein operates within amino-acid biosynthesis; glycine biosynthesis; glycine from L-serine: step 1/1. Its function is as follows. Catalyzes the reversible interconversion of serine and glycine with tetrahydrofolate (THF) serving as the one-carbon carrier. This reaction serves as the major source of one-carbon groups required for the biosynthesis of purines, thymidylate, methionine, and other important biomolecules. Also exhibits THF-independent aldolase activity toward beta-hydroxyamino acids, producing glycine and aldehydes, via a retro-aldol mechanism. The protein is Serine hydroxymethyltransferase of Aromatoleum aromaticum (strain DSM 19018 / LMG 30748 / EbN1) (Azoarcus sp. (strain EbN1)).